A 445-amino-acid polypeptide reads, in one-letter code: Trigger factor (445 aa).

In terms of domain architecture, PPIase FKBP-type spans glycine 166–valine 251.

It belongs to the FKBP-type PPIase family. Tig subfamily.

It localises to the cytoplasm. The catalysed reaction is [protein]-peptidylproline (omega=180) = [protein]-peptidylproline (omega=0). Involved in protein export. Acts as a chaperone by maintaining the newly synthesized protein in an open conformation. Functions as a peptidyl-prolyl cis-trans isomerase. This chain is Trigger factor, found in Gluconacetobacter diazotrophicus (strain ATCC 49037 / DSM 5601 / CCUG 37298 / CIP 103539 / LMG 7603 / PAl5).